The chain runs to 835 residues: Translation initiation factor IF-2 (835 aa).

The interval 1–240 (MSDSDGKKTL…RKQERARQKA (240 aa)) is disordered. The span at 50-59 (AGKGGAGGVA) shows a compositional bias: gly residues. Over residues 86–152 (KAREAEEAAQ…AEAAKKRAAA (67 aa)) the composition is skewed to basic and acidic residues. Over residues 153–169 (DKAAAAAPKSDAGVAPA) the composition is skewed to low complexity. The segment covering 184-205 (RKAEREREERGRGAKGRNDGGR) has biased composition (basic and acidic residues). Positions 332–500 (PRPPVITIMG…AIALQAEILE (169 aa)) constitute a tr-type G domain. The interval 341 to 348 (GHVDHGKT) is G1. 341-348 (GHVDHGKT) is a binding site for GTP. Residues 366–370 (GITQH) form a G2 region. The interval 388–391 (DTPG) is G3. GTP is bound by residues 388 to 392 (DTPGH) and 442 to 445 (NKID). A G4 region spans residues 442-445 (NKID). Residues 478–480 (SAH) are G5.

Belongs to the TRAFAC class translation factor GTPase superfamily. Classic translation factor GTPase family. IF-2 subfamily.

Its subcellular location is the cytoplasm. In terms of biological role, one of the essential components for the initiation of protein synthesis. Protects formylmethionyl-tRNA from spontaneous hydrolysis and promotes its binding to the 30S ribosomal subunits. Also involved in the hydrolysis of GTP during the formation of the 70S ribosomal complex. The chain is Translation initiation factor IF-2 from Ruegeria sp. (strain TM1040) (Silicibacter sp.).